The sequence spans 495 residues: ATP synthase subunit beta, chloroplastic (495 aa).

Position 172–179 (172–179 (GGAGVGKT)) interacts with ATP.

The protein belongs to the ATPase alpha/beta chains family. F-type ATPases have 2 components, CF(1) - the catalytic core - and CF(0) - the membrane proton channel. CF(1) has five subunits: alpha(3), beta(3), gamma(1), delta(1), epsilon(1). CF(0) has four main subunits: a(1), b(1), b'(1) and c(9-12).

The protein resides in the plastid. The protein localises to the chloroplast thylakoid membrane. It catalyses the reaction ATP + H2O + 4 H(+)(in) = ADP + phosphate + 5 H(+)(out). Its function is as follows. Produces ATP from ADP in the presence of a proton gradient across the membrane. The catalytic sites are hosted primarily by the beta subunits. This is ATP synthase subunit beta, chloroplastic from Scilla siberica (Siberian squill).